A 207-amino-acid chain; its full sequence is Cytochrome c biogenesis ATP-binding export protein CcmA (207 aa).

The 202-residue stretch at 6-207 (LCAEGLECIR…RGDCRSLNLS (202 aa)) folds into the ABC transporter domain. 38–45 (GANGAGKT) provides a ligand contact to ATP.

The protein belongs to the ABC transporter superfamily. CcmA exporter (TC 3.A.1.107) family. The complex is composed of two ATP-binding proteins (CcmA) and two transmembrane proteins (CcmB).

Its subcellular location is the cell inner membrane. It carries out the reaction heme b(in) + ATP + H2O = heme b(out) + ADP + phosphate + H(+). Functionally, part of the ABC transporter complex CcmAB involved in the biogenesis of c-type cytochromes; once thought to export heme, this seems not to be the case, but its exact role is uncertain. Responsible for energy coupling to the transport system. In Methylococcus capsulatus (strain ATCC 33009 / NCIMB 11132 / Bath), this protein is Cytochrome c biogenesis ATP-binding export protein CcmA.